A 327-amino-acid chain; its full sequence is Phenylalanine--tRNA ligase alpha subunit (327 aa).

A Mg(2+)-binding site is contributed by Glu252.

The protein belongs to the class-II aminoacyl-tRNA synthetase family. Phe-tRNA synthetase alpha subunit type 1 subfamily. Tetramer of two alpha and two beta subunits. Requires Mg(2+) as cofactor.

The protein localises to the cytoplasm. The catalysed reaction is tRNA(Phe) + L-phenylalanine + ATP = L-phenylalanyl-tRNA(Phe) + AMP + diphosphate + H(+). In Aeromonas salmonicida (strain A449), this protein is Phenylalanine--tRNA ligase alpha subunit.